Here is a 383-residue protein sequence, read N- to C-terminus: Probable transcriptional repressor C1348.12 (383 aa).

The zn(2)-C6 fungal-type DNA-binding region spans 34 to 60 (CVICRSKKQKCDGQLPCLYCKKYEYQC).

It is found in the nucleus. Its function is as follows. Probable transcriptional repressor of multidrug resistance genes. This is Probable transcriptional repressor C1348.12 from Schizosaccharomyces pombe (strain 972 / ATCC 24843) (Fission yeast).